Consider the following 154-residue polypeptide: Probable prefoldin subunit 5 (154 aa).

Belongs to the prefoldin subunit alpha family. In terms of assembly, heterohexamer of two PFD-alpha type and four PFD-beta type subunits. Interacts with byr1.

The protein resides in the cytoplasm. Functionally, binds specifically to cytosolic chaperonin (c-CPN) and transfers target proteins to it. Binds to nascent polypeptide chain and promotes folding in an environment in which there are many competing pathways for nonnative proteins. Required for normal cytoskeletal function and when bound to byr1, is involved in the regulation of sexual differentiation. The chain is Probable prefoldin subunit 5 (bob1) from Schizosaccharomyces pombe (strain 972 / ATCC 24843) (Fission yeast).